A 334-amino-acid chain; its full sequence is Glycerol-3-phosphate dehydrogenase [NAD(P)+] (334 aa).

NADPH-binding residues include W13, R33, and K106. Sn-glycerol 3-phosphate is bound by residues K106, G137, and S139. An NADPH-binding site is contributed by A141. K192, D245, S255, R256, and N257 together coordinate sn-glycerol 3-phosphate. The Proton acceptor role is filled by K192. R256 is an NADPH binding site. Residues V280 and E282 each coordinate NADPH.

Belongs to the NAD-dependent glycerol-3-phosphate dehydrogenase family.

The protein resides in the cytoplasm. It catalyses the reaction sn-glycerol 3-phosphate + NAD(+) = dihydroxyacetone phosphate + NADH + H(+). The catalysed reaction is sn-glycerol 3-phosphate + NADP(+) = dihydroxyacetone phosphate + NADPH + H(+). It functions in the pathway membrane lipid metabolism; glycerophospholipid metabolism. Its function is as follows. Catalyzes the reduction of the glycolytic intermediate dihydroxyacetone phosphate (DHAP) to sn-glycerol 3-phosphate (G3P), the key precursor for phospholipid synthesis. The sequence is that of Glycerol-3-phosphate dehydrogenase [NAD(P)+] from Chlamydia trachomatis serovar A (strain ATCC VR-571B / DSM 19440 / HAR-13).